A 369-amino-acid chain; its full sequence is S-(hydroxymethyl)glutathione dehydrogenase (369 aa).

Zn(2+) contacts are provided by Cys40, His62, Cys92, Cys95, Cys98, Cys106, and Cys169.

This sequence belongs to the zinc-containing alcohol dehydrogenase family. Class-III subfamily. In terms of assembly, homodimer. The cofactor is Zn(2+).

Its subcellular location is the cytoplasm. It catalyses the reaction S-(hydroxymethyl)glutathione + NADP(+) = S-formylglutathione + NADPH + H(+). The catalysed reaction is S-(hydroxymethyl)glutathione + NAD(+) = S-formylglutathione + NADH + H(+). The enzyme catalyses a primary alcohol + NAD(+) = an aldehyde + NADH + H(+). It carries out the reaction a secondary alcohol + NAD(+) = a ketone + NADH + H(+). It catalyses the reaction S-nitrosoglutathione + NADH + H(+) = S-(hydroxysulfenamide)glutathione + NAD(+). Its function is as follows. Has high formaldehyde dehydrogenase activity in the presence of glutathione and catalyzes the oxidation of normal alcohols in a reaction that is not GSH-dependent. In addition, hemithiolacetals other than those formed from GSH, including omega-thiol fatty acids, also are substrates. Also acts as a S-nitroso-glutathione reductase by catalyzing the NADH-dependent reduction of S-nitrosoglutathione. This is S-(hydroxymethyl)glutathione dehydrogenase (frmA) from Synechocystis sp. (strain ATCC 27184 / PCC 6803 / Kazusa).